A 367-amino-acid polypeptide reads, in one-letter code: Heme A synthase (367 aa).

5 consecutive transmembrane segments (helical) span residues 26–46 (IRGW…VGGA), 111–131 (LLAR…WVTG), 139–159 (LPLL…WWMV), 174–194 (LATH…IYRG), and 212–232 (AGAI…VAGL). Histidine 274 serves as a coordination point for heme. 3 consecutive transmembrane segments (helical) span residues 276 to 296 (LGAY…LRAA), 305 to 325 (SVLL…TLLL), and 327 to 347 (VPIG…GFAI). Residue histidine 335 coordinates heme.

This sequence belongs to the COX15/CtaA family. Type 2 subfamily. As to quaternary structure, interacts with CtaB. Requires heme b as cofactor.

The protein resides in the cell membrane. The enzyme catalyses Fe(II)-heme o + 2 A + H2O = Fe(II)-heme a + 2 AH2. The protein operates within porphyrin-containing compound metabolism; heme A biosynthesis; heme A from heme O: step 1/1. Functionally, catalyzes the conversion of heme O to heme A by two successive hydroxylations of the methyl group at C8. The first hydroxylation forms heme I, the second hydroxylation results in an unstable dihydroxymethyl group, which spontaneously dehydrates, resulting in the formyl group of heme A. The chain is Heme A synthase from Rhizobium meliloti (strain 1021) (Ensifer meliloti).